The chain runs to 263 residues: MNKHASLIHPTAVIAPSATLAPDVQIGAFTLIGNDVQIDTGTIIGSHCTIHGPTRIGRNNRFIGQAAIGGEPQDKKFAGERTELLIGDNNTIREFVTINRGTGGGGGVTSIGNDNWILAYTHIAHDCHVGHHCVFSNNASLAGHVTVGDWVIFSGFSGAHQFCRIGRYAFIGMGTLINGDVPPFTLIGSDTLGRPRGINNEGLKRRNFTPERITAIKRAYRTLYVAGLPLAEAKQQLAEQAKDNDDIKELLQFIETAQRPLLR.

The protein belongs to the transferase hexapeptide repeat family. LpxA subfamily. Homotrimer.

It is found in the cytoplasm. The enzyme catalyses a (3R)-hydroxyacyl-[ACP] + UDP-N-acetyl-alpha-D-glucosamine = a UDP-3-O-[(3R)-3-hydroxyacyl]-N-acetyl-alpha-D-glucosamine + holo-[ACP]. Its pathway is glycolipid biosynthesis; lipid IV(A) biosynthesis; lipid IV(A) from (3R)-3-hydroxytetradecanoyl-[acyl-carrier-protein] and UDP-N-acetyl-alpha-D-glucosamine: step 1/6. Functionally, involved in the biosynthesis of lipid A, a phosphorylated glycolipid that anchors the lipopolysaccharide to the outer membrane of the cell. This Xylella fastidiosa (strain Temecula1 / ATCC 700964) protein is Acyl-[acyl-carrier-protein]--UDP-N-acetylglucosamine O-acyltransferase.